The chain runs to 473 residues: MDPSSKPLREIPGSYGIPFFQPIKDRLEYFYGTGGRDEYFRSRMQKYQSTVFRANMPPGPFVSSNPKVIVLLDAKSFPILFDVSKVEKKDLFTGTYMPSTKLTGGYRVLSYLDPSEPRHAQLKNLLFFMLKNSSNRVIPQFETTYTELFEGLEAELAKNGKAAFNDVGEQAAFRFLGRAYFNSNPEETKLGTSAPTLISSWVLFNLAPTLDLGLPWFLQEPLLHTFRLPAFLIKSTYNKLYDYFQSVATPVMEQAEKLGVPKDEAVHNILFAVCFNTFGGVKILFPNTLKWIGLAGENLHTQLAEEIRGAIKSYGDGNVTLEAIEQMPLTKSVVYESLRIEPPVPPQYGKAKSNFTIESHDATFEVKKGEMLFGYQPFATKDPKVFDRPEEYVPDRFVGDGEALLKYVWWSNGPETESPTVENKQCAGKDFVVLITRLFVIELFRRYDSFEIELGESPLGAAVTLTFLKRASI.

Heme b contacts are provided by Lys-88, His-119, and Lys-123. (13S)-hydroperoxy-(9Z,11E)-octadecadienoate-binding residues include Ser-199 and Lys-282. Heme b-binding residues include Lys-424 and Cys-426.

Belongs to the cytochrome P450 family. Requires heme b as cofactor.

It carries out the reaction (13S)-hydroperoxy-(9Z,11E,15Z)-octadecatrienoate = (9Z,13S,15Z)-12,13-epoxyoctadeca-9,11,15-trienoate + H2O. It catalyses the reaction (13S)-hydroperoxy-(9Z,11E)-octadecadienoate = (9Z,13S)-12,13-epoxyoctadeca-9,11-dienoate + H2O. The protein operates within lipid metabolism; oxylipin biosynthesis. Its function is as follows. Cytochrome P450 enzyme involved in the biosynthesis of oxylipin jasmonates, important phytohormones acting as growth regulators and signaling molecules for plant defense. Functions as an allene oxide synthase that converts hydroperoxy fatty acids to unstable allene epoxides. Catalyzes the dehydration of 13-HPOTE ((13S)-hydroperoxy-(9Z,11E,15Z)-octadecatrienoate). Also catalyzes the dehydration of 13-HPODE ((13S)-hydroperoxy-(9Z,11E)-octadecadienoate). The protein is Allene oxide synthase CYP74A2 of Parthenium argentatum (Guayule rubber plant).